We begin with the raw amino-acid sequence, 258 residues long: Imidazole glycerol phosphate synthase subunit HisF (258 aa).

Catalysis depends on residues aspartate 11 and aspartate 130.

The protein belongs to the HisA/HisF family. As to quaternary structure, heterodimer of HisH and HisF.

The protein resides in the cytoplasm. The enzyme catalyses 5-[(5-phospho-1-deoxy-D-ribulos-1-ylimino)methylamino]-1-(5-phospho-beta-D-ribosyl)imidazole-4-carboxamide + L-glutamine = D-erythro-1-(imidazol-4-yl)glycerol 3-phosphate + 5-amino-1-(5-phospho-beta-D-ribosyl)imidazole-4-carboxamide + L-glutamate + H(+). The protein operates within amino-acid biosynthesis; L-histidine biosynthesis; L-histidine from 5-phospho-alpha-D-ribose 1-diphosphate: step 5/9. In terms of biological role, IGPS catalyzes the conversion of PRFAR and glutamine to IGP, AICAR and glutamate. The HisF subunit catalyzes the cyclization activity that produces IGP and AICAR from PRFAR using the ammonia provided by the HisH subunit. The polypeptide is Imidazole glycerol phosphate synthase subunit HisF (Pectobacterium carotovorum subsp. carotovorum (strain PC1)).